Consider the following 611-residue polypeptide: Oxidoreductase cicC (611 aa).

An N-terminal signal peptide occupies residues M1–A20. FAD contacts are provided by residues N45–A46 and E65–A66. 2 N-linked (GlcNAc...) asparagine glycosylation sites follow: N76 and N113. FAD is bound by residues V123 and N131 to T134. N-linked (GlcNAc...) asparagine glycans are attached at residues N282, N410, and N475. H547 acts as the Proton acceptor in catalysis. Catalysis depends on H547, which acts as the Proton donor. FAD is bound at residue A581. H591 functions as the Proton acceptor in the catalytic mechanism. P592–I593 provides a ligand contact to FAD.

It belongs to the GMC oxidoreductase family. FAD is required as a cofactor.

The protein operates within phytotoxin biosynthesis. Oxidoreductase; part of the gene cluster that mediates the biosynthesis of cichorine, a phytotoxin active against knapweed, corn, and soybeans. The first step in the pathway is performed by the non-reducing polyketide synthase pkbA that condenses one acetyl-CoA starter unit with 3 malonyl-CoA units. PkbA also catalyzes one methylation step to produce 3-methylorsellinate. The nonribosomal peptide synthase-like protein cicB, the cytochrome P450 monooxygenase cicH and the O-methyltransferase cicE are involved in the conversion of 3-methylorsellinate into nidulol. CicB converts 3-methylorsellinate to a yet unidentified intermediate, cicH may play a ring-closing role for cichorine and cicE is plausibly responsible for the methylation of one of the phenol groups. The oxidoreductase cicC acts downstream with still unidentified enzymes to further convert nidulol into cichorine. In Emericella nidulans (strain FGSC A4 / ATCC 38163 / CBS 112.46 / NRRL 194 / M139) (Aspergillus nidulans), this protein is Oxidoreductase cicC.